Reading from the N-terminus, the 108-residue chain is MAGKTVTRADLSEAVYQQVGLSRAESAALVETVLAEICTCLSSGETVKLSSFGSFVVRSKGKRIGRNPKTGVEVEIEPRQVMVFKPSNVLKARINGGHVNGLDMDEDE.

Belongs to the bacterial histone-like protein family. Heterodimer of an alpha and a beta chain.

In terms of biological role, this protein is one of the two subunits of integration host factor, a specific DNA-binding protein that functions in genetic recombination as well as in transcriptional and translational control. In Methylorubrum extorquens (strain CM4 / NCIMB 13688) (Methylobacterium extorquens), this protein is Integration host factor subunit alpha.